The primary structure comprises 227 residues: uncharacterized protein (227 aa).

4 helical membrane passes run 17-37 (VGIKGYLAFFLTIIFFSGVFS), 79-99 (GFLFALELAPSVILSLGIISI), 112-132 (LMTPVLKPLLGIPGICSLALI), and 181-201 (VAVFAFLGTSVIVPLAVILVF).

The protein localises to the cell membrane. This is an uncharacterized protein from Escherichia coli (strain K12).